The primary structure comprises 76 residues: MQLALAAKYIGASIATLGLGGAAIGIALVFVALINGTSRNPSLRSTLFPQAILGFALSEACGLFCLMISFLLLYAV.

Transmembrane regions (helical) follow at residues 14–34 (IATL…VALI) and 52–72 (ILGF…SFLL).

Belongs to the ATPase C chain family. F-type ATPases have 2 components, CF(1) - the catalytic core - and CF(0) - the membrane proton channel. CF(1) has five subunits: alpha(3), beta(3), gamma(1), delta(1), epsilon(1). CF(0) has three main subunits: a, b and c.

It localises to the mitochondrion membrane. Its function is as follows. Mitochondrial membrane ATP synthase (F(1)F(0) ATP synthase or Complex V) produces ATP from ADP in the presence of a proton gradient across the membrane which is generated by electron transport complexes of the respiratory chain. F-type ATPases consist of two structural domains, F(1) - containing the extramembraneous catalytic core and F(0) - containing the membrane proton channel, linked together by a central stalk and a peripheral stalk. During catalysis, ATP synthesis in the catalytic domain of F(1) is coupled via a rotary mechanism of the central stalk subunits to proton translocation. Part of the complex F(0) domain. A homomeric c-ring of probably 10 subunits is part of the complex rotary element. In Candida albicans (strain SC5314 / ATCC MYA-2876) (Yeast), this protein is ATP synthase subunit 9, mitochondrial (ATP9).